We begin with the raw amino-acid sequence, 84 residues long: Polcalcin Nic t 1 (84 aa).

2 consecutive EF-hand domains span residues glutamine 6 to serine 40 and valine 41 to leucine 76. The Ca(2+) site is built by aspartate 19, asparagine 21, aspartate 23, lysine 25, glutamate 30, aspartate 54, aspartate 56, aspartate 58, and glutamate 65.

The chain is Polcalcin Nic t 1 (Nict1) from Nicotiana tabacum (Common tobacco).